Reading from the N-terminus, the 688-residue chain is Polyphosphate kinase (688 aa).

Asn-45 contributes to the ATP binding site. Positions 375 and 405 each coordinate Mg(2+). In terms of domain architecture, PLD phosphodiesterase spans 430 to 464 (PGLKIHAKLFLISRKEGDDVVRYAHIGTGNFNEKT). The Phosphohistidine intermediate role is filled by His-435. Tyr-468, Arg-564, and His-592 together coordinate ATP.

Belongs to the polyphosphate kinase 1 (PPK1) family. Mg(2+) serves as cofactor. In terms of processing, an intermediate of this reaction is the autophosphorylated ppk in which a phosphate is covalently linked to a histidine residue through a N-P bond.

It carries out the reaction [phosphate](n) + ATP = [phosphate](n+1) + ADP. Its function is as follows. Catalyzes the reversible transfer of the terminal phosphate of ATP to form a long-chain polyphosphate (polyP). This chain is Polyphosphate kinase, found in Salmonella typhimurium (strain LT2 / SGSC1412 / ATCC 700720).